The primary structure comprises 493 residues: MDQDGFHSIAWDDAPSSNPPLSAPSPSQSPFEEGFESISPSSAQPPASDQYEGYDNSKAGEAGDVGVTLDRRERLGGHEVDGSVWNGKWMDVQVREPAKEHEGSKDMYVSYAVKTETSLPTFRKPLTVVRRRFQDFVFLREHLVKNFPACVVPPIPDKHRLEYIKGDRFSPEFVERRRLDLQRFADRIARHPVLQRSQLVNDFLQSTEWSVAKHHHISHPPPESHASLIDSLSDTFINAFSRVRKPDARFVEMTEELERFEEGLTGVERVVGRGKSRVDDLAADYQDMAAAYQGLGYLESGITEPLNRFAEKMLDFSTLLKHMNNTTIEPFLSSSHSLLSYSATHRNVIKLRDQKQLDFEELSAYLSAIVSERDRLAALSSGHTAAPVGLGTYLRDQMDKLRGTDDIHTRRERMRKMDGKIKELQDAVTLAHETSNAFSEEVIKEHAYFELEKKQEMKDALQAYTDGQVEMLQQAMDDWDRIIPLLQRIRVDV.

Residues 1-67 form a disordered region; it reads MDQDGFHSIA…KAGEAGDVGV (67 aa). The segment covering 37–48 has biased composition (low complexity); sequence SISPSSAQPPAS. The PX domain maps to 89–211; it reads WMDVQVREPA…DFLQSTEWSV (123 aa). A 1,2-diacyl-sn-glycero-3-phospho-(1D-myo-inositol-3-phosphate) contacts are provided by R132, K158, and R177.

Belongs to the sorting nexin family.

It is found in the cytoplasm. The protein resides in the cytosol. The protein localises to the preautophagosomal structure membrane. Its subcellular location is the endosome membrane. In terms of biological role, sorting nexin, involved in the separation or division of vacuoles throughout the entire life cycle of the cells. Involved in retrieval of late-Golgi SNAREs from post-Golgi endosomes to the trans-Golgi network, for cytoplasm to vacuole transport (Cvt), and autophagy of large cargos including mitophagy, pexophagy and glycophagy. This Cryptococcus neoformans var. neoformans serotype D (strain B-3501A) (Filobasidiella neoformans) protein is Sorting nexin-4 (SNX4).